We begin with the raw amino-acid sequence, 210 residues long: Dephospho-CoA kinase (210 aa).

The DPCK domain maps to 4–202 (WVGLTGGIGS…AFYSGIFASK (199 aa)). Residue 12–17 (GSGKSA) participates in ATP binding.

This sequence belongs to the CoaE family.

The protein localises to the cytoplasm. The enzyme catalyses 3'-dephospho-CoA + ATP = ADP + CoA + H(+). It participates in cofactor biosynthesis; coenzyme A biosynthesis; CoA from (R)-pantothenate: step 5/5. Catalyzes the phosphorylation of the 3'-hydroxyl group of dephosphocoenzyme A to form coenzyme A. The polypeptide is Dephospho-CoA kinase (Neisseria meningitidis serogroup B (strain ATCC BAA-335 / MC58)).